Here is an 852-residue protein sequence, read N- to C-terminus: Lon protease homolog 2, peroxisomal (852 aa).

At S2 the chain carries N-acetylserine. The Lon N-terminal domain occupies 13 to 222 (LPLLLTHESV…MTIPLLVRQI (210 aa)). Position 375–382 (375–382 (GPPGVGKT)) interacts with ATP. The Lon proteolytic domain maps to 651-837 (LSQPGVAIGL…DEVLNAAFDG (187 aa)). Residues S743 and K786 contribute to the active site. The Microbody targeting signal signature appears at 850–852 (SKL).

The protein belongs to the peptidase S16 family. Interacts with PEX5. Interacts with TYSND1. May interact with enzymes involved in beta-oxidation of fatty acids, including ACOX1/AOX.

The protein localises to the peroxisome matrix. The enzyme catalyses Hydrolysis of proteins in presence of ATP.. Its function is as follows. ATP-dependent serine protease that mediates the selective degradation of misfolded and unassembled polypeptides in the peroxisomal matrix. Necessary for type 2 peroxisome targeting signal (PTS2)-containing protein processing and facilitates peroxisome matrix protein import. May indirectly regulate peroxisomal fatty acid beta-oxidation through degradation of the self-processed forms of TYSND1. The protein is Lon protease homolog 2, peroxisomal (Lonp2) of Rattus norvegicus (Rat).